Consider the following 195-residue polypeptide: Nucleoside-triphosphatase THEP1 (195 aa).

Residues 11–18 (GRPGSGKS) and 103–110 (VVVIDEIG) contribute to the ATP site.

This sequence belongs to the THEP1 NTPase family.

The catalysed reaction is a ribonucleoside 5'-triphosphate + H2O = a ribonucleoside 5'-diphosphate + phosphate + H(+). Its function is as follows. Has nucleotide phosphatase activity towards ATP, GTP, CTP, TTP and UTP. May hydrolyze nucleoside diphosphates with lower efficiency. The chain is Nucleoside-triphosphatase THEP1 from Korarchaeum cryptofilum (strain OPF8).